The following is a 347-amino-acid chain: UDP-3-O-acylglucosamine N-acyltransferase (347 aa).

H248 functions as the Proton acceptor in the catalytic mechanism.

It belongs to the transferase hexapeptide repeat family. LpxD subfamily. Homotrimer.

It catalyses the reaction a UDP-3-O-[(3R)-3-hydroxyacyl]-alpha-D-glucosamine + a (3R)-hydroxyacyl-[ACP] = a UDP-2-N,3-O-bis[(3R)-3-hydroxyacyl]-alpha-D-glucosamine + holo-[ACP] + H(+). It functions in the pathway bacterial outer membrane biogenesis; LPS lipid A biosynthesis. Its function is as follows. Catalyzes the N-acylation of UDP-3-O-acylglucosamine using 3-hydroxyacyl-ACP as the acyl donor. Is involved in the biosynthesis of lipid A, a phosphorylated glycolipid that anchors the lipopolysaccharide to the outer membrane of the cell. The chain is UDP-3-O-acylglucosamine N-acyltransferase from Parasynechococcus marenigrum (strain WH8102).